The primary structure comprises 430 residues: Probable sugar isomerase R00627 (430 aa).

Mn(2+) contacts are provided by His-257, Asp-289, and Asp-291.

It belongs to the rhamnose isomerase family. Requires Mn(2+) as cofactor.

This chain is Probable sugar isomerase R00627, found in Rhizobium meliloti (strain 1021) (Ensifer meliloti).